The primary structure comprises 569 residues: Probable ABC transporter permease protein y4fN (569 aa).

The next 13 helical transmembrane spans lie at Val-10–Pro-30, Val-68–Val-88, Gly-98–Gly-118, Phe-121–Pro-141, Phe-145–Leu-165, Val-196–Ala-216, Pro-247–Leu-267, Leu-304–Phe-324, Met-363–Val-383, Ile-395–Ala-415, Leu-426–Leu-446, Val-480–Leu-500, and Ala-534–Ile-554. Residues Leu-64 to Ser-268 form the ABC transmembrane type-1 1 domain. One can recognise an ABC transmembrane type-1 2 domain in the interval Phe-357–Val-551.

The protein belongs to the binding-protein-dependent transport system permease family. CysTW subfamily.

Its subcellular location is the cell inner membrane. Functionally, probably part of the binding-protein-dependent transport system y4fNOP. Probably responsible for the translocation of the substrate across the membrane. This Sinorhizobium fredii (strain NBRC 101917 / NGR234) protein is Probable ABC transporter permease protein y4fN.